Here is a 338-residue protein sequence, read N- to C-terminus: Glycerol-3-phosphate dehydrogenase [NAD(P)+] 1 (338 aa).

The NADPH site is built by Ser11, Trp12, His32, Arg33, and Lys109. Positions 109, 140, and 142 each coordinate sn-glycerol 3-phosphate. Ala144 contacts NADPH. Positions 195, 248, 258, 259, and 260 each coordinate sn-glycerol 3-phosphate. Catalysis depends on Lys195, which acts as the Proton acceptor. NADPH is bound at residue Arg259. Val283 and Glu285 together coordinate NADPH.

Belongs to the NAD-dependent glycerol-3-phosphate dehydrogenase family.

Its subcellular location is the cytoplasm. The catalysed reaction is sn-glycerol 3-phosphate + NAD(+) = dihydroxyacetone phosphate + NADH + H(+). The enzyme catalyses sn-glycerol 3-phosphate + NADP(+) = dihydroxyacetone phosphate + NADPH + H(+). It participates in membrane lipid metabolism; glycerophospholipid metabolism. Catalyzes the reduction of the glycolytic intermediate dihydroxyacetone phosphate (DHAP) to sn-glycerol 3-phosphate (G3P), the key precursor for phospholipid synthesis. This Lactobacillus delbrueckii subsp. bulgaricus (strain ATCC 11842 / DSM 20081 / BCRC 10696 / JCM 1002 / NBRC 13953 / NCIMB 11778 / NCTC 12712 / WDCM 00102 / Lb 14) protein is Glycerol-3-phosphate dehydrogenase [NAD(P)+] 1.